Consider the following 199-residue polypeptide: Nuclear transcription factor Y subunit C-2 (199 aa).

This sequence belongs to the NFYC/HAP5 subunit family. As to quaternary structure, heterotrimeric transcription factor composed of three components, NF-YA, NF-YB and NF-YC. NF-YB and NF-YC must interact and dimerize for NF-YA association and DNA binding. Interacts with HTT1 in both cytoplasm and nucleus. As to expression, ubiquitous.

The protein resides in the nucleus. It is found in the cytoplasm. Functionally, stimulates the transcription of various genes by recognizing and binding to a CCAAT motif in promoters. This Arabidopsis thaliana (Mouse-ear cress) protein is Nuclear transcription factor Y subunit C-2 (NFYC2).